A 149-amino-acid chain; its full sequence is Calmodulin (149 aa).

Thr2 is modified (N-acetylthreonine). EF-hand domains follow at residues 8–43, 44–79, 81–116, and 117–149; these read EQIAEFKEAFSLFDKDGDGTITTKELGTVMRSLGQN, PTEAELQDMINEVDADGNGTIDFPEFLTMMARKMKE, DSEEEIREAFRVFDKDGNGFISAAELRHVMTNLGEK, and LTDEEVDEMIREADIDGDGQVNYEEFVAMMTSK. Ca(2+)-binding residues include Asp21, Asp23, Asp25, Thr27, Glu32, Asp57, Asp59, Asn61, Thr63, Glu68, Asp94, Asp96, Asn98, and Glu105. Lys116 is subject to N6,N6,N6-trimethyllysine. The Ca(2+) site is built by Asp130, Asp132, Asp134, Gln136, and Glu141.

The protein belongs to the calmodulin family.

Functionally, calmodulin mediates the control of a large number of enzymes, ion channels and other proteins by Ca(2+). Among the enzymes to be stimulated by the calmodulin-Ca(2+) complex are a number of protein kinases and phosphatases. This Halichondria okadai (Marine sponge) protein is Calmodulin.